Consider the following 80-residue polypeptide: Small ribosomal subunit protein bS18 (80 aa).

It belongs to the bacterial ribosomal protein bS18 family. In terms of assembly, part of the 30S ribosomal subunit. Forms a tight heterodimer with protein bS6.

Its function is as follows. Binds as a heterodimer with protein bS6 to the central domain of the 16S rRNA, where it helps stabilize the platform of the 30S subunit. In Acholeplasma laidlawii (strain PG-8A), this protein is Small ribosomal subunit protein bS18.